A 337-amino-acid chain; its full sequence is 4-hydroxy-2-oxovalerate aldolase (337 aa).

The region spanning 6–256 is the Pyruvate carboxyltransferase domain; the sequence is IRIMDTTLRD…ETGIDLFQIM (251 aa). 14–15 lines the substrate pocket; sequence RD. A Mn(2+)-binding site is contributed by Asp15. The active-site Proton acceptor is the His18. The substrate site is built by Ser168 and His195. His195 and His197 together coordinate Mn(2+). Residue Tyr286 participates in substrate binding.

This sequence belongs to the 4-hydroxy-2-oxovalerate aldolase family.

It catalyses the reaction (S)-4-hydroxy-2-oxopentanoate = acetaldehyde + pyruvate. The chain is 4-hydroxy-2-oxovalerate aldolase (nahM) from Geobacillus genomosp. 3.